Here is a 238-residue protein sequence, read N- to C-terminus: MIREPFRYRETFAAILADTPAHADAAKRGMIAARQVLECYIARDPFFASTFFPYEPETDETLICHMANAAAHAGVGPMATVAGAIAAAGINAMMDAGATFGVIDNGGDIALVSDRDVRVGVHAGSAPVSDRIAFIVPPQEQHSYGICTSSATVGPSISFGMADAVTIFARDPLDADAWATAVCNRIRPDDHRVLETIDPSRVDGVYAIMGESVVSWGKVPPVVPARVDEQLIAAGDRL.

This sequence belongs to the UPF0280 family.

This is UPF0280 protein Mboo_1274 from Methanoregula boonei (strain DSM 21154 / JCM 14090 / 6A8).